The chain runs to 524 residues: Excitatory amino acid transporter 3 (524 aa).

The Cytoplasmic portion of the chain corresponds to 1–18; the sequence is MGKPARKGCEWKRFLKNN. Residues 19 to 38 traverse the membrane as a helical segment; that stretch reads WVLLSTVAAVVLGITTGVLV. Topologically, residues 39-61 are extracellular; the sequence is REHSNLSTLEKFYFAFPGEILMR. N43 carries N-linked (GlcNAc...) asparagine glycosylation. Residues 62–82 form a helical membrane-spanning segment; that stretch reads MLKLIILPLIISSMITGVAAL. Residues 83-93 lie on the Cytoplasmic side of the membrane; that stretch reads DSNVSGKIGLR. Residues 94-114 traverse the membrane as a helical segment; that stretch reads AVVYYFCTTLIAVILGIVLVV. Residues Y98, T101, and T102 each coordinate Na(+). Residues 115-205 lie on the Extracellular side of the membrane; that stretch reads SIKPGVTQKV…KTKEYKIVGM (91 aa). N-linked (GlcNAc...) asparagine glycosylation is found at N178 and N195. A helical membrane pass occupies residues 206–229; that stretch reads YSDGINVLGLIVFCLVFGLVIGKM. Topologically, residues 230-238 are cytoplasmic; that stretch reads GEKGQILVD. A helical membrane pass occupies residues 239 to 266; sequence FFNALSDATMKIVQIIMCYMPLGILFLI. The Extracellular segment spans residues 267 to 286; sequence AGKIIEVEDWEIFRKLGLYM. The chain crosses the membrane as a helical span at residues 287–308; sequence ATVLTGLAIHSIVILPLIYFIV. At 309–313 the chain is on the cytoplasmic side; that stretch reads VRKNP. An intramembrane region (discontinuously helical) is located at residues 314 to 344; it reads FRFAMGMAQALLTALMISSSSATLPVTFRCA. 2 residues coordinate L-aspartate: S331 and S333. At 345 to 353 the chain is on the cytoplasmic side; sequence EENNQVDKR. The chain crosses the membrane as a helical span at residues 354 to 380; that stretch reads ITRFVLPVGATINMDGTALYEAVAAVF. Residues G362, T364, N366, and D368 each coordinate Na(+). T370 lines the L-aspartate pocket. At 381 to 393 the chain is on the extracellular side; sequence IAQLNDLDLGIGQ. An intramembrane region (discontinuously helical) is located at residues 394–427; it reads IITISITATSASIGAAGVPQAGLVTMVIVLSAVG. Residues S405, I406, and A408 each coordinate Na(+). L-aspartate is bound at residue V411. Over 428–440 the chain is Extracellular; sequence LPAEDVTLIIAVD. A helical membrane pass occupies residues 441–462; sequence WLLDRFRTMVNVLGDAFGTGIV. The L-aspartate site is built by R447, T448, and N451. The Na(+) site is built by N451 and D455. Residues 463-524 are Cytoplasmic-facing; the sequence is EKLSKKELEQ…TISFTQTSQF (62 aa). 2 positions are modified to phosphoserine: S517 and S522.

Belongs to the dicarboxylate/amino acid:cation symporter (DAACS) (TC 2.A.23) family. SLC1A1 subfamily. Homotrimer. Interacts with ARL6IP5. Interacts with RTN2 (via N-terminus); the interaction promotes cell surface expression of SLC1A1. Interacts with SORCS2; this interaction is important for normal expression at the cell membrane. Post-translationally, glycosylated. In terms of tissue distribution, expressed in all tissues tested including liver, muscle, testis, ovary, retinoblastoma cell line, neurons and brain (in which there was dense expression in substantia nigra, red nucleus, hippocampus and in cerebral cortical layers).

Its subcellular location is the cell membrane. It is found in the apical cell membrane. It localises to the synapse. The protein resides in the synaptosome. The protein localises to the early endosome membrane. Its subcellular location is the late endosome membrane. It is found in the recycling endosome membrane. The catalysed reaction is K(+)(in) + L-glutamate(out) + 3 Na(+)(out) + H(+)(out) = K(+)(out) + L-glutamate(in) + 3 Na(+)(in) + H(+)(in). The enzyme catalyses K(+)(in) + L-aspartate(out) + 3 Na(+)(out) + H(+)(out) = K(+)(out) + L-aspartate(in) + 3 Na(+)(in) + H(+)(in). It carries out the reaction D-aspartate(out) + K(+)(in) + 3 Na(+)(out) + H(+)(out) = D-aspartate(in) + K(+)(out) + 3 Na(+)(in) + H(+)(in). It catalyses the reaction K(+)(in) + L-cysteine(out) + 3 Na(+)(out) + H(+)(out) = K(+)(out) + L-cysteine(in) + 3 Na(+)(in) + H(+)(in). Functionally, sodium-dependent, high-affinity amino acid transporter that mediates the uptake of L-glutamate and also L-aspartate and D-aspartate. Can also transport L-cysteine. Functions as a symporter that transports one amino acid molecule together with two or three Na(+) ions and one proton, in parallel with the counter-transport of one K(+) ion. Mediates Cl(-) flux that is not coupled to amino acid transport; this avoids the accumulation of negative charges due to aspartate and Na(+) symport. Plays an important role in L-glutamate and L-aspartate reabsorption in renal tubuli. Plays a redundant role in the rapid removal of released glutamate from the synaptic cleft, which is essential for terminating the postsynaptic action of glutamate. Contributes to glutathione biosynthesis and protection against oxidative stress via its role in L-glutamate and L-cysteine transport. Negatively regulated by ARL6IP5. The polypeptide is Excitatory amino acid transporter 3 (Homo sapiens (Human)).